The chain runs to 346 residues: Structure-specific endonuclease subunit SLX1 (346 aa).

In terms of domain architecture, GIY-YIG spans 22-105; it reads DFYGVYLLRS…QHPYQTRHIK (84 aa). The SLX1-type zinc finger occupies 216–306; that stretch reads CFICNETIDY…TPLQGKCLSC (91 aa).

The protein belongs to the SLX1 family. Forms a heterodimer with SLX4. A divalent metal cation serves as cofactor.

It is found in the nucleus. Functionally, catalytic subunit of the SLX1-SLX4 structure-specific endonuclease that resolves DNA secondary structures generated during DNA repair and recombination. Has endonuclease activity towards branched DNA substrates, introducing single-strand cuts in duplex DNA close to junctions with ss-DNA. This is Structure-specific endonuclease subunit SLX1 from Debaryomyces hansenii (strain ATCC 36239 / CBS 767 / BCRC 21394 / JCM 1990 / NBRC 0083 / IGC 2968) (Yeast).